The primary structure comprises 258 residues: Thymidylate synthase (258 aa).

DUMP is bound at residue arginine 21. Histidine 51 serves as a coordination point for (6R)-5,10-methylene-5,6,7,8-tetrahydrofolate. 121–122 (RR) contributes to the dUMP binding site. Cysteine 141 serves as the catalytic Nucleophile. Residues 161–164 (RSAD), asparagine 172, and 202–204 (HLY) each bind dUMP. A (6R)-5,10-methylene-5,6,7,8-tetrahydrofolate-binding site is contributed by aspartate 164. Alanine 257 serves as a coordination point for (6R)-5,10-methylene-5,6,7,8-tetrahydrofolate.

It belongs to the thymidylate synthase family. Bacterial-type ThyA subfamily. As to quaternary structure, homodimer.

The protein resides in the cytoplasm. The enzyme catalyses dUMP + (6R)-5,10-methylene-5,6,7,8-tetrahydrofolate = 7,8-dihydrofolate + dTMP. It functions in the pathway pyrimidine metabolism; dTTP biosynthesis. Its function is as follows. Catalyzes the reductive methylation of 2'-deoxyuridine-5'-monophosphate (dUMP) to 2'-deoxythymidine-5'-monophosphate (dTMP) while utilizing 5,10-methylenetetrahydrofolate (mTHF) as the methyl donor and reductant in the reaction, yielding dihydrofolate (DHF) as a by-product. This enzymatic reaction provides an intracellular de novo source of dTMP, an essential precursor for DNA biosynthesis. The sequence is that of Thymidylate synthase from Dichelobacter nodosus (strain VCS1703A).